Here is a 685-residue protein sequence, read N- to C-terminus: Threonine--tRNA ligase (685 aa).

Residues 1 to 28 are disordered; the sequence is MTSPAPEHSAAPLRVPAGTTAGTAVREA. In terms of domain architecture, TGS spans 1–65; that stretch reads MTSPAPEHSA…EVDVDVEPVA (65 aa). The catalytic stretch occupies residues 262–568; sequence DHRKLGTELD…LTEHYAGAFP (307 aa). 3 residues coordinate Zn(2+): Cys367, His418, and His545.

Belongs to the class-II aminoacyl-tRNA synthetase family. As to quaternary structure, homodimer. Zn(2+) is required as a cofactor.

The protein localises to the cytoplasm. It carries out the reaction tRNA(Thr) + L-threonine + ATP = L-threonyl-tRNA(Thr) + AMP + diphosphate + H(+). Functionally, catalyzes the attachment of threonine to tRNA(Thr) in a two-step reaction: L-threonine is first activated by ATP to form Thr-AMP and then transferred to the acceptor end of tRNA(Thr). Also edits incorrectly charged L-seryl-tRNA(Thr). This is Threonine--tRNA ligase from Rhodococcus erythropolis (strain PR4 / NBRC 100887).